The chain runs to 235 residues: Endonuclease V (235 aa).

Residues Asp-47 and Asp-117 each contribute to the Mg(2+) site.

It belongs to the endonuclease V family. Mg(2+) is required as a cofactor.

It is found in the cytoplasm. It catalyses the reaction Endonucleolytic cleavage at apurinic or apyrimidinic sites to products with a 5'-phosphate.. DNA repair enzyme involved in the repair of deaminated bases. Selectively cleaves double-stranded DNA at the second phosphodiester bond 3' to a deoxyinosine leaving behind the intact lesion on the nicked DNA. This chain is Endonuclease V, found in Protochlamydia amoebophila (strain UWE25).